Consider the following 85-residue polypeptide: Large ribosomal subunit protein bL27 (85 aa).

The protein belongs to the bacterial ribosomal protein bL27 family.

The polypeptide is Large ribosomal subunit protein bL27 (Campylobacter curvus (strain 525.92)).